The sequence spans 258 residues: MCSPTTENNNNNNDHLVQSSDPNHPANLIPALCAKFWTLGWVTGTGGGASIRSDDLVYLAPSGVQKELMKPDDIYVLSLAAQAQSLDKRQRVYLRSPANYKPSQCTPLFLAAFTKRNAGCCIHTHSHWAVLVTLILETQGAGKDREFMINNIEQIKGFGKGFGKSGNLGYHDTLKIPVIENTAHEEDLTEFLEEAMDKYPDTYAVLVRRHGVYVWGENVHKAKTMCESLDYLFQLAVEMKQLGLPWVTDIEPTVPTRK.

The interval 1–21 (MCSPTTENNNNNNDHLVQSSD) is disordered. Residue Cys-105 participates in substrate binding. Positions 123 and 125 each coordinate Zn(2+). Glu-153 acts as the Proton donor/acceptor in catalysis. Residue His-210 coordinates Zn(2+).

It belongs to the aldolase class II family. MtnB subfamily. Zn(2+) is required as a cofactor.

The protein resides in the cytoplasm. It carries out the reaction 5-(methylsulfanyl)-D-ribulose 1-phosphate = 5-methylsulfanyl-2,3-dioxopentyl phosphate + H2O. It participates in amino-acid biosynthesis; L-methionine biosynthesis via salvage pathway; L-methionine from S-methyl-5-thio-alpha-D-ribose 1-phosphate: step 2/6. In terms of biological role, catalyzes the dehydration of methylthioribulose-1-phosphate (MTRu-1-P) into 2,3-diketo-5-methylthiopentyl-1-phosphate (DK-MTP-1-P). In Neurospora crassa (strain ATCC 24698 / 74-OR23-1A / CBS 708.71 / DSM 1257 / FGSC 987), this protein is Methylthioribulose-1-phosphate dehydratase.